The primary structure comprises 156 residues: ATP synthase subunit b (156 aa).

The helical transmembrane segment at 7 to 27 threads the bilayer; sequence LIVQMLVFVVFIGLTMKFIWP.

Belongs to the ATPase B chain family. In terms of assembly, F-type ATPases have 2 components, F(1) - the catalytic core - and F(0) - the membrane proton channel. F(1) has five subunits: alpha(3), beta(3), gamma(1), delta(1), epsilon(1). F(0) has three main subunits: a(1), b(2) and c(10-14). The alpha and beta chains form an alternating ring which encloses part of the gamma chain. F(1) is attached to F(0) by a central stalk formed by the gamma and epsilon chains, while a peripheral stalk is formed by the delta and b chains.

It is found in the cell inner membrane. Functionally, f(1)F(0) ATP synthase produces ATP from ADP in the presence of a proton or sodium gradient. F-type ATPases consist of two structural domains, F(1) containing the extramembraneous catalytic core and F(0) containing the membrane proton channel, linked together by a central stalk and a peripheral stalk. During catalysis, ATP synthesis in the catalytic domain of F(1) is coupled via a rotary mechanism of the central stalk subunits to proton translocation. Its function is as follows. Component of the F(0) channel, it forms part of the peripheral stalk, linking F(1) to F(0). This is ATP synthase subunit b from Coxiella burnetii (strain CbuK_Q154) (Coxiella burnetii (strain Q154)).